The chain runs to 86 residues: YDAAAGKATYDASCAMCHKTGMMGAPKVGDKAAWAPHIAKGMNVMVANSIKGYKGTKGMMPAKGGNPKLTDAQVGNAVAYMVGQSK.

Residues cysteine 14, cysteine 17, histidine 18, and methionine 60 each coordinate heme c.

In terms of processing, binds 1 heme c group covalently per subunit.

Functionally, this basic c-type monoheme cytochrome has been found exclusively in the green photosynthetic bacteria, although its role in bacterial photosynthesis is not established. It has an unusually low redox potential compared with mitochondrial cytochrome c. It is reactive with cytochrome c oxidases but not with reductases. The chain is Cytochrome c-555 from Chlorobaculum thiosulfatiphilum (Chlorobium limicola f.sp. thiosulfatophilum).